A 176-amino-acid polypeptide reads, in one-letter code: RNA polymerase sigma factor SigO (176 aa).

The short motif at 30 to 43 (DARSLDELFKQFYK) is the Polymerase core binding element. Residues 139–158 (MQEIADSLGESRQNISNIHK) constitute a DNA-binding region (H-T-H motif).

Belongs to the sigma-70 factor family. As to quaternary structure, interacts with RNA polymerase.

In terms of biological role, sigma factors are initiation factors that promote the attachment of RNA polymerase to specific initiation sites and are then released. Together with its coactivator RsoA, positively regulates the expression of at least three operons, including oxdC-yvrL, sigO-rsoA and yvrJ. Required for the acid stress-dependent induction of the oxalate decarboxylase oxdC. In Bacillus subtilis (strain 168), this protein is RNA polymerase sigma factor SigO (sigO).